A 342-amino-acid polypeptide reads, in one-letter code: MVQNIAILGASGYTGAELVRLIATHPAMRIVALSGDRKAGMAMSEVFPFLRHLDLPRLQKIEEIDFSSVDLAFCALPHATSQAVIAGLPRDLKVVDLSADFRLRDPAAYETWYGKPHAAPELQKEAVYGLTEFYRDEIRGARLVAGTGCNAATGQYAIRPLIEAGVIDLDDILIDLKAGVSGAGRSLKENLLHAELSEGTHAYSAGGRHRHLGEFDQEFSKIAGRPVQVRFTPHLTPMNRGILANVYVKGDPQAVHRALTERYLTETFLEVLPFGALPSTRDIRGSNYVHIGVIGDRVPGCAMVVAVLDNLCKGSSGQAIQNANLMLGLDEAAGLGLAPVFP.

Cys-149 is a catalytic residue.

Belongs to the NAGSA dehydrogenase family. Type 1 subfamily.

The protein resides in the cytoplasm. It carries out the reaction N-acetyl-L-glutamate 5-semialdehyde + phosphate + NADP(+) = N-acetyl-L-glutamyl 5-phosphate + NADPH + H(+). It functions in the pathway amino-acid biosynthesis; L-arginine biosynthesis; N(2)-acetyl-L-ornithine from L-glutamate: step 3/4. Functionally, catalyzes the NADPH-dependent reduction of N-acetyl-5-glutamyl phosphate to yield N-acetyl-L-glutamate 5-semialdehyde. The chain is N-acetyl-gamma-glutamyl-phosphate reductase from Cereibacter sphaeroides (strain ATCC 17023 / DSM 158 / JCM 6121 / CCUG 31486 / LMG 2827 / NBRC 12203 / NCIMB 8253 / ATH 2.4.1.) (Rhodobacter sphaeroides).